A 131-amino-acid polypeptide reads, in one-letter code: Large ribosomal subunit protein bL12 (131 aa).

This sequence belongs to the bacterial ribosomal protein bL12 family. In terms of assembly, homodimer. Part of the ribosomal stalk of the 50S ribosomal subunit. Forms a multimeric L10(L12)X complex, where L10 forms an elongated spine to which 2 to 4 L12 dimers bind in a sequential fashion. Binds GTP-bound translation factors.

Functionally, forms part of the ribosomal stalk which helps the ribosome interact with GTP-bound translation factors. Is thus essential for accurate translation. This Nocardioides sp. (strain ATCC BAA-499 / JS614) protein is Large ribosomal subunit protein bL12.